Here is a 959-residue protein sequence, read N- to C-terminus: E3 ubiquitin-protein ligase arkadia-B (959 aa).

The span at 51 to 66 shows a compositional bias: polar residues; that stretch reads CSDTNKQQSDLNSNGT. Disordered regions lie at residues 51-171, 189-212, and 225-271; these read CSDT…VSSL, RKRF…MLQR, and LLPS…SGGM. The span at 112–131 shows a compositional bias: low complexity; the sequence is SSFSDCISSPSSSSHFGDSD. Residues 142-156 are compositionally biased toward polar residues; the sequence is PLSSVNSTPRTQSAR. The span at 228-246 shows a compositional bias: low complexity; that stretch reads SSSSSSENDLSSESSSSSS. The span at 256 to 267 shows a compositional bias: polar residues; the sequence is TGENRQDGTTLP. Residues 275-279 carry the SUMO interaction motif 1 (SIM) motif; the sequence is VVVIE. The SUMO interaction motif 2 (SIM) motif lies at 300–306; it reads EVEIVTV. Residues 318 to 341 are disordered; it reads HPRSHWGQNSQSGRTQEQRTRNRV. Positions 323-332 are enriched in polar residues; that stretch reads WGQNSQSGRT. Positions 355–359 match the SUMO interaction motif 3 (SIM) motif; it reads VVDLT. The span at 370–397 shows a compositional bias: polar residues; that stretch reads TTSGRVESQPVSIVSSLTSTSEPASDSM. Disordered regions lie at residues 370 to 399, 475 to 499, 615 to 649, and 661 to 680; these read TTSG…SMSG, HFPH…SFRD, PRPL…MDYV, and PSLT…HLSA. A compositionally biased stretch (basic residues) spans 475-487; that stretch reads HFPHHHHHHHHSS. The segment covering 620-632 has biased composition (polar residues); it reads HQTSSCPHSNSAS. The segment covering 633 to 646 has biased composition (pro residues); it reads QPPPPPPPPPPPPM. The segment at 872 to 874 is ubiquitin binding; sequence YPH. Positions 907 and 910 each coordinate Zn(2+). Residues 907 to 948 form an RING-type; atypical zinc finger; sequence CTICLSILEEGEDVRRLPCMHLFHQVCVDQWLITNKKCPICR. Positions 922–926 are ubiquitin binding; the sequence is RLPCM. Zn(2+) is bound by residues His930 and Cys933.

The protein belongs to the Arkadia family. Monomer.

The protein localises to the nucleus. Its subcellular location is the cytoplasm. The protein resides in the PML body. The enzyme catalyses S-ubiquitinyl-[E2 ubiquitin-conjugating enzyme]-L-cysteine + [acceptor protein]-L-lysine = [E2 ubiquitin-conjugating enzyme]-L-cysteine + N(6)-ubiquitinyl-[acceptor protein]-L-lysine.. It participates in protein modification; protein ubiquitination. Binds free ubiquitin non-covalently via its RING-type zinc finger. Ubiquitin-binding leads to enhance the E3 ubiquitin-protein ligase activity by stabilizing the ubiquitin-conjugating enzyme E2 (donor ubiquitin) in the 'closed' conformation and activating ubiquitin transfer. Functionally, E3 ubiquitin-protein ligase required for mesoderm patterning during embryonic development. Acts as an enhancer of the transcriptional responses of the smad2/smad3 effectors, which are activated downstream of BMP. Acts by mediating ubiquitination and degradation of SMAD inhibitors such as smad7, inducing their proteasomal degradation and thereby enhancing the transcriptional activity of TGF-beta and BMP. Specifically binds polysumoylated chains via SUMO interaction motifs (SIMs) and mediates ubiquitination of sumoylated substrates. The regulation of the BMP-SMAD signaling is however independent of sumoylation and is not dependent of SUMO interaction motifs (SIMs). The polypeptide is E3 ubiquitin-protein ligase arkadia-B (rnf111-b) (Xenopus laevis (African clawed frog)).